Here is a 1046-residue protein sequence, read N- to C-terminus: UDP-N-acetylglucosamine--peptide N-acetylglucosaminyltransferase 110 kDa subunit (1046 aa).

N-acetylalanine is present on Ala2. 2 positions are modified to phosphoserine; by GSK3-beta; alternate: Ser3 and Ser4. Residues Ser3 and Ser4 are each glycosylated (O-linked (GlcNAc) serine; alternate). A Phosphoserine modification is found at Ser20. 12 TPR repeats span residues 21–54 (FQGL…EPDN), 89–122 (AEAY…KPDF), 123–156 (IDGY…NPDL), 157–190 (YCVR…QPNF), 191–224 (AVAW…DPNF), 225–258 (LDAY…SPNH), 259–292 (AVVH…QPHF), 293–326 (PDAY…CPTH), 327–360 (ADSL…FPEF), 361–394 (AAAH…SPTF), 395–428 (ADAY…NPAF), and 429–462 (ADAH…KPDF). A glycan (O-linked (GlcNAc) serine; by autocatalysis) is linked at Ser399. Residue Thr454 is modified to Phosphothreonine. The stretch at 463–473 (PDAYCNLAHCL) is one TPR 13; truncated repeat. The short motif at 464–466 (DAY) is the DFP motif element. The Nuclear localization signal signature appears at 487 to 503 (KKLVSIVAEQLEKNRLP). The active-site Proton acceptor is His508. Residues Gln849, Lys852, 906-908 (APK), 911-914 (HVRR), 930-932 (HTT), and Asp935 each bind UDP. A Phosphotyrosine modification is found at Tyr989. The segment at 991–1010 (KKIRGKVWKQRISSPLFNTK) is required for phosphatidylinositol 3,4,5-triphosphate binding.

This sequence belongs to the glycosyltransferase 41 family. O-GlcNAc transferase subfamily. In terms of assembly, monomer; may exist in different oligomerization states in cells. Homotrimer, oligomerizes via TPR repeats 6 and 7. Trimerization is not necessary for activity in vitro, however it increases affinity for UDP-GlcNAc. Component of a THAP1/THAP3-HCFC1-OGT complex. Component of the NSL complex at least composed of MOF/KAT8, KANSL1, KANSL2, KANSL3, MCRS1, PHF20, OGT1/OGT, WDR5 and HCFC1. Found in a complex with KIF5B, RHOT1, RHOT2 and TRAK1. Found in a complex composed of at least SINHCAF, SIN3A, HDAC1, SAP30, RBBP4, OGT and TET1. Component of a complex composed of KMT2E/MLL5, OGT and USP7; the complex stabilizes KMT2E/MLL5, preventing KMT2E/MLL5 ubiquitination and proteasomal-mediated degradation. Interacts (via TPRs 1-6) with SIN3A; the interaction mediates transcriptional repression in parallel with histone deacetylase. Interacts (via TPR 5-6) with TET1, TET2 and TET3. Interacts (via TPR repeats 6 and 7) with ATXN10. Interacts with NSD2. Interacts with PROSER1; this interaction mediates TET2 O-GlcNAcylation and stability by promoting the interaction between OGT and TET2. In terms of processing, ubiquitinated by the SCF(FBXO31) complex, leading to its proteasomal degradation. Post-translationally, phosphorylation on Ser-3 or Ser-4 by GSK3-beta positively regulates its activity. Phosphorylation at Thr-454 by AMPK promotes nuclear localization. Glycosylated via autocatalysis; O-GlcNAcylation at Ser-399 promotes nuclear localization.

The protein localises to the cytoplasm. Its subcellular location is the nucleus. It localises to the cell membrane. The protein resides in the mitochondrion membrane. It is found in the cell projection. It carries out the reaction L-seryl-[protein] + UDP-N-acetyl-alpha-D-glucosamine = 3-O-(N-acetyl-beta-D-glucosaminyl)-L-seryl-[protein] + UDP + H(+). It catalyses the reaction L-threonyl-[protein] + UDP-N-acetyl-alpha-D-glucosamine = 3-O-(N-acetyl-beta-D-glucosaminyl)-L-threonyl-[protein] + UDP + H(+). It participates in protein modification; protein glycosylation. With respect to regulation, subject to product inhibition by UDP. Catalyzes the transfer of a single N-acetylglucosamine from UDP-GlcNAc to a serine or threonine residue in cytoplasmic and nuclear proteins resulting in their modification with a beta-linked N-acetylglucosamine (O-GlcNAc). Glycosylates a large and diverse number of proteins including histone H2B, AKT1, AMPK, ATG4B, CAPRIN1, EZH2, FNIP1, GSDMD, KRT7, LMNA, LMNB1, LMNB2, RPTOR, HOXA1, PFKL, KMT2E/MLL5, MAPT/TAU, TET2, RBL2, RET, NOD2 and HCFC1. Can regulate their cellular processes via cross-talk between glycosylation and phosphorylation or by affecting proteolytic processing. Involved in insulin resistance in muscle and adipocyte cells via glycosylating insulin signaling components and inhibiting the 'Thr-308' phosphorylation of AKT1, enhancing IRS1 phosphorylation and attenuating insulin signaling. Involved in glycolysis regulation by mediating glycosylation of 6-phosphofructokinase PFKL, inhibiting its activity. Plays a key role in chromatin structure by mediating O-GlcNAcylation of 'Ser-112' of histone H2B: recruited to CpG-rich transcription start sites of active genes via its interaction with TET proteins (TET1, TET2 or TET3). As part of the NSL complex indirectly involved in acetylation of nucleosomal histone H4 on several lysine residues. O-GlcNAcylation of 'Ser-75' of EZH2 increases its stability, and facilitating the formation of H3K27me3 by the PRC2/EED-EZH2 complex. Stabilizes KMT2E/MLL5 by mediating its glycosylation, thereby preventing KMT2E/MLL5 ubiquitination. Regulates circadian oscillation of the clock genes and glucose homeostasis in the liver. Stabilizes clock proteins BMAL1 and CLOCK through O-glycosylation, which prevents their ubiquitination and subsequent degradation. Promotes the CLOCK-BMAL1-mediated transcription of genes in the negative loop of the circadian clock such as PER1/2 and CRY1/2. O-glycosylates HCFC1 and regulates its proteolytic processing and transcriptional activity. Component of a THAP1/THAP3-HCFC1-OGT complex that is required for the regulation of the transcriptional activity of RRM1. Regulates mitochondrial motility in neurons by mediating glycosylation of TRAK1. Promotes autophagy by mediating O-glycosylation of ATG4B. Acts as a regulator of mTORC1 signaling by mediating O-glycosylation of RPTOR and FNIP1: O-GlcNAcylation of RPTOR in response to glucose sufficiency promotes activation of the mTORC1 complex. This chain is UDP-N-acetylglucosamine--peptide N-acetylglucosaminyltransferase 110 kDa subunit (Ogt), found in Mus musculus (Mouse).